Reading from the N-terminus, the 295-residue chain is 2-dehydropantoate 2-reductase (295 aa).

NADP(+) contacts are provided by residues 9–14 (GPGAVG), asparagine 100, and alanine 126. A substrate-binding site is contributed by asparagine 100. Lysine 177 serves as the catalytic Proton donor. Substrate is bound by residues asparagine 181 and serine 246. Residue glutamate 258 participates in NADP(+) binding.

Belongs to the ketopantoate reductase family.

It localises to the cytoplasm. It catalyses the reaction (R)-pantoate + NADP(+) = 2-dehydropantoate + NADPH + H(+). Its pathway is cofactor biosynthesis; (R)-pantothenate biosynthesis; (R)-pantoate from 3-methyl-2-oxobutanoate: step 2/2. Its function is as follows. Catalyzes the NADPH-dependent reduction of ketopantoate into pantoic acid. This chain is 2-dehydropantoate 2-reductase, found in Mycobacterium tuberculosis (strain CDC 1551 / Oshkosh).